A 446-amino-acid polypeptide reads, in one-letter code: Tol-Pal system protein TolB (446 aa).

The N-terminal stretch at 1–43 (MRKLWAPNWLSRRQNANPTRDQSRHALMAWLAAALMSAGAAHA) is a signal peptide.

This sequence belongs to the TolB family. In terms of assembly, the Tol-Pal system is composed of five core proteins: the inner membrane proteins TolA, TolQ and TolR, the periplasmic protein TolB and the outer membrane protein Pal. They form a network linking the inner and outer membranes and the peptidoglycan layer.

It is found in the periplasm. Its function is as follows. Part of the Tol-Pal system, which plays a role in outer membrane invagination during cell division and is important for maintaining outer membrane integrity. The protein is Tol-Pal system protein TolB of Cupriavidus metallidurans (strain ATCC 43123 / DSM 2839 / NBRC 102507 / CH34) (Ralstonia metallidurans).